A 216-amino-acid polypeptide reads, in one-letter code: Eukaryotic translation initiation factor 3 subunit K (216 aa).

In terms of domain architecture, PCI spans 40–202 (YDLDANLAVL…HIKSKNIAEK (163 aa)).

This sequence belongs to the eIF-3 subunit K family. In terms of assembly, component of the eukaryotic translation initiation factor 3 (eIF-3) complex.

The protein resides in the cytoplasm. Component of the eukaryotic translation initiation factor 3 (eIF-3) complex, which is involved in protein synthesis of a specialized repertoire of mRNAs and, together with other initiation factors, stimulates binding of mRNA and methionyl-tRNAi to the 40S ribosome. The eIF-3 complex specifically targets and initiates translation of a subset of mRNAs involved in cell proliferation. The protein is Eukaryotic translation initiation factor 3 subunit K of Nematostella vectensis (Starlet sea anemone).